Reading from the N-terminus, the 632-residue chain is Putative acetyl-CoA decarbonylase/synthase complex subunit alpha-like (632 aa).

6 residues coordinate [Ni-4Fe-4S] cluster: H200, H226, C263, C379, C408, and C438.

This sequence belongs to the Ni-containing carbon monoxide dehydrogenase family.

Part of the ACDS complex that catalyzes the reversible cleavage of acetyl-CoA, allowing autotrophic growth from CO(2). The alpha-epsilon subcomponent functions as a carbon monoxide dehydrogenase. The chain is Putative acetyl-CoA decarbonylase/synthase complex subunit alpha-like (cdhA2) from Methanopyrus kandleri (strain AV19 / DSM 6324 / JCM 9639 / NBRC 100938).